A 121-amino-acid chain; its full sequence is Large ribosomal subunit protein uL14 (121 aa).

Belongs to the universal ribosomal protein uL14 family. Part of the 50S ribosomal subunit. Forms a cluster with proteins L3 and L19. In the 70S ribosome, L14 and L19 interact and together make contacts with the 16S rRNA in bridges B5 and B8.

Functionally, binds to 23S rRNA. Forms part of two intersubunit bridges in the 70S ribosome. The protein is Large ribosomal subunit protein uL14 of Mycoplasmopsis synoviae (strain 53) (Mycoplasma synoviae).